Reading from the N-terminus, the 228-residue chain is MDMFQGDIGKSVVEVLERLCCEIDSPEQQICCGQPAYNSGYVKESKNAMKRMITAFEHADYVVSPSGSCVYMFKEYPEIFKGDPLWASKAKALAAKTYEFTEFIVHVLKIEDVGAHLEGKATYHTSCHMTRLLGVNEAPIKLLQNVDGLQYVELPGKDRCCGFGGTFSVKMGNISGEMVQEKVHHVEETGADYLIGADAGCLINMGGRIHRQGKPIKVMHIAEVLNCR.

The protein belongs to the LutA/YkgE family.

Its function is as follows. Is involved in L-lactate degradation and allows cells to grow with lactate as the sole carbon source. This Lysinibacillus sphaericus (strain C3-41) protein is Lactate utilization protein A.